A 315-amino-acid polypeptide reads, in one-letter code: Olfactory receptor 3A3 (315 aa).

At 1–28 (MESEAGTNRTAVAEFMLLGLVQTEEMQS) the chain is on the extracellular side. N-linked (GlcNAc...) asparagine glycosylation is present at asparagine 8. A helical transmembrane segment spans residues 29–52 (VIFVLLLFAYLVTTGGNLSILAAI). The Cytoplasmic portion of the chain corresponds to 53-60 (LVEPKLHT). Residues 61-82 (PMYFFLGNLSVLDVGCITVTVP) form a helical membrane-spanning segment. At 83–103 (AMLGRLLSHKSTISYDACLSQ) the chain is on the extracellular side. Residues cysteine 100 and cysteine 192 are joined by a disulfide bond. The chain crosses the membrane as a helical span at residues 104-123 (LFFFHLLAGMDCFLLTAMAY). At 124–143 (DRFLAICRPLTYSTHMNQRV) the chain is on the cytoplasmic side. The helical transmembrane segment at 144–161 (QRMLVAVSWTCAFTNALT) threads the bilayer. The Extracellular portion of the chain corresponds to 162-199 (HTIALTTLNFCGPSVINHFYCDLPQLFQLSCSSTQLNE). A helical transmembrane segment spans residues 200 to 222 (LLLFVAAAVMAVAPLVFISVSYA). The Cytoplasmic segment spans residues 223 to 239 (HVVAAVLQIHSAEGRKK). A helical transmembrane segment spans residues 240–262 (AFSTCGSHLTVVGIFYGTGVFSY). Residues 263-275 (MRLGSVESSDKDK) are Extracellular-facing. A helical transmembrane segment spans residues 276–295 (GVGVFMTVINPMLNPLIYSL). At 296–315 (RNTDVQGALCQLLVVKRSLT) the chain is on the cytoplasmic side.

It belongs to the G-protein coupled receptor 1 family.

It localises to the cell membrane. Odorant receptor. This chain is Olfactory receptor 3A3 (OR3A3), found in Pan troglodytes (Chimpanzee).